Consider the following 182-residue polypeptide: Protein SYM1 (182 aa).

The next 3 helical transmembrane spans lie at 51 to 70 (TLRPFLYGAVLFSLVGDKWY), 98 to 118 (LIFAPIGVPLYYTAMALMEGG), and 135 to 155 (LLANWIVWPAFQLCNFSLVPV).

It belongs to the peroxisomal membrane protein PXMP2/4 family.

The protein resides in the mitochondrion inner membrane. Its function is as follows. May be involved in cellular response to stress. Required to maintain mitochondrial DNA (mtDNA) integrity and stability. This chain is Protein SYM1 (SYM1), found in Eremothecium gossypii (strain ATCC 10895 / CBS 109.51 / FGSC 9923 / NRRL Y-1056) (Yeast).